Reading from the N-terminus, the 147-residue chain is Small ribosomal subunit protein bS6 (147 aa).

Residues 103–147 (AARMAANLPSFPEDEDTEEKGSAPLAREEEGIGEEAQTDEAEDKE) are disordered. The span at 133-147 (GIGEEAQTDEAEDKE) shows a compositional bias: acidic residues.

This sequence belongs to the bacterial ribosomal protein bS6 family.

Binds together with bS18 to 16S ribosomal RNA. This Syntrophobacter fumaroxidans (strain DSM 10017 / MPOB) protein is Small ribosomal subunit protein bS6.